Here is a 158-residue protein sequence, read N- to C-terminus: Glutathione peroxidase-like peroxiredoxin gpx1 (158 aa).

Cys36 serves as the catalytic Cysteine sulfenic acid (-SOH) intermediate. Cys36 and Cys82 are disulfide-bonded.

Belongs to the glutathione peroxidase family. In terms of assembly, monomer.

The protein resides in the cytoplasm. It localises to the mitochondrion. It carries out the reaction a hydroperoxide + [thioredoxin]-dithiol = an alcohol + [thioredoxin]-disulfide + H2O. Glutathione peroxidase-like protein that protects cells during oxidative stress. Has peroxidase activity reducing hydrogen peroxide, alkyl and phospholipid hydroperoxides using preferentially thioredoxin as a reducing power. May act as a scavenger of H(2)O(2). This Schizosaccharomyces pombe (strain 972 / ATCC 24843) (Fission yeast) protein is Glutathione peroxidase-like peroxiredoxin gpx1.